Reading from the N-terminus, the 117-residue chain is Colipase (117 aa).

A signal peptide spans 1 to 22 (MNIFNILLPIVVLLLVFGLTAA). Intrachain disulfides connect cysteine 39–cysteine 50, cysteine 45–cysteine 61, cysteine 49–cysteine 83, cysteine 71–cysteine 91, and cysteine 85–cysteine 109.

This sequence belongs to the colipase family. Forms a 1:1 stoichiometric complex with pancreatic lipase.

The protein localises to the secreted. Colipase is a cofactor of pancreatic lipase. It allows the lipase to anchor itself to the lipid-water interface. Without colipase the enzyme is washed off by bile salts, which have an inhibitory effect on the lipase. In Xenopus tropicalis (Western clawed frog), this protein is Colipase (clps).